Consider the following 454-residue polypeptide: tRNA modification GTPase MnmE (454 aa).

Residues R23, E80, and K120 each coordinate (6S)-5-formyl-5,6,7,8-tetrahydrofolate. In terms of domain architecture, TrmE-type G spans 216–377 (GMKVVIAGRP…LRDHLKQSMG (162 aa)). K(+) is bound at residue N226. Residues 226-231 (NAGKSS), 245-251 (TAIAGTT), 270-273 (DTAG), 335-338 (NKAD), and 358-360 (SAR) contribute to the GTP site. S230 is a Mg(2+) binding site. K(+) is bound by residues T245, I247, and T250. T251 is a Mg(2+) binding site. K454 provides a ligand contact to (6S)-5-formyl-5,6,7,8-tetrahydrofolate.

Belongs to the TRAFAC class TrmE-Era-EngA-EngB-Septin-like GTPase superfamily. TrmE GTPase family. In terms of assembly, homodimer. Heterotetramer of two MnmE and two MnmG subunits. K(+) serves as cofactor.

It is found in the cytoplasm. In terms of biological role, exhibits a very high intrinsic GTPase hydrolysis rate. Involved in the addition of a carboxymethylaminomethyl (cmnm) group at the wobble position (U34) of certain tRNAs, forming tRNA-cmnm(5)s(2)U34. The sequence is that of tRNA modification GTPase MnmE from Pectobacterium atrosepticum (strain SCRI 1043 / ATCC BAA-672) (Erwinia carotovora subsp. atroseptica).